The primary structure comprises 770 residues: Potassium transporter 25 (770 aa).

Over 1–23 (MDLEAAHGAAAAPGKRRRRARES) the chain is Cytoplasmic. A helical transmembrane segment spans residues 24–44 (WGASLLLAYQSLGVVYGDVAT). The Extracellular portion of the chain corresponds to 45 to 70 (SPLYVYKSAFAGDDIQHSAGNEEIYG). Residues 71 to 91 (VLSFVFWTLTLISLVKYVLIV) traverse the membrane as a helical segment. Residues 92-152 (LRADDGGEGG…MLERYRVLQR (61 aa)) lie on the Cytoplasmic side of the membrane. The chain crosses the membrane as a helical span at residues 153–173 (LLLLFALLGTCMVIGDGVLTP). At 174–194 (AVSVYSAVSGLELSMEHEHHK) the chain is on the extracellular side. The chain crosses the membrane as a helical span at residues 195–215 (YVQLPVTCAILIGLFALQHYG). At 216–218 (THR) the chain is on the cytoplasmic side. A helical membrane pass occupies residues 219 to 239 (VGFIFAPIVCVWLLCISAIGV). At 240–267 (YNIVHWNHHVYRALSPYYMYQFLKKTQT) the chain is on the extracellular side. The helical transmembrane segment at 268–288 (GGWMSLGGILLCVTGSEAMYA) threads the bilayer. Over 289-299 (DLGHFSQSSIK) the chain is Cytoplasmic. A helical transmembrane segment spans residues 300-320 (IAFMSVVYPALVLAYMGQAAY). The Extracellular segment spans residues 321–346 (ISQHHSFENAYHIGFYVSVPEKLRWP). Residues 347–367 (VLVIAILAAVVGSQAVITGTF) traverse the membrane as a helical segment. At 368–394 (SIIKQCSSLSCFPGVKIVHTSSTVHGQ) the chain is on the cytoplasmic side. The helical transmembrane segment at 395–415 (IYIPEINWILMILCLAVTLGF) threads the bilayer. The Extracellular segment spans residues 416–425 (RNTKHLANAQ). The helical transmembrane segment at 426-446 (GLAVITVMLVTTCLMSLVIVL) threads the bilayer. The Cytoplasmic segment spans residues 447-451 (CWNKS). A helical membrane pass occupies residues 452–472 (IFLALGFLIFFGTIEVLYFSA). At 473–479 (SLVKFHE) the chain is on the extracellular side. Residues 480 to 500 (GAWVPITLSFIFMIVMCVWHY) form a helical membrane-spanning segment. The Cytoplasmic segment spans residues 501–770 (GTIKKYEFDF…TLEVGMVYQV (270 aa)).

The protein belongs to the HAK/KUP transporter (TC 2.A.72.3) family.

The protein localises to the membrane. In terms of biological role, high-affinity potassium transporter. This is Potassium transporter 25 (HAK25) from Oryza sativa subsp. japonica (Rice).